We begin with the raw amino-acid sequence, 138 residues long: Oleosin G (138 aa).

3 helical membrane passes run 14–34 (ILGF…TGLT), 48–68 (VLIF…VAVA), and 69–89 (GFLS…WLYN). Positions 47–58 (PVLIFFSPILIP) match the Proline-knot motif.

This sequence belongs to the oleosin family. Expressed in megagametophytes (at protein level).

It localises to the lipid droplet. It is found in the membrane. The protein is Oleosin G of Pinus massoniana (Chinese red pine).